A 152-amino-acid polypeptide reads, in one-letter code: Small ribosomal subunit protein uS13A (152 aa).

This sequence belongs to the universal ribosomal protein uS13 family. In terms of assembly, component of the small ribosomal subunit (SSU). Mature yeast ribosomes consist of a small (40S) and a large (60S) subunit. The 40S small subunit contains 1 molecule of ribosomal RNA (18S rRNA) and at least 33 different proteins. The large 60S subunit contains 3 rRNA molecules (25S, 5.8S and 5S rRNA) and at least 46 different proteins.

It is found in the cytoplasm. In terms of biological role, component of the ribosome, a large ribonucleoprotein complex responsible for the synthesis of proteins in the cell. The small ribosomal subunit (SSU) binds messenger RNAs (mRNAs) and translates the encoded message by selecting cognate aminoacyl-transfer RNA (tRNA) molecules. The large subunit (LSU) contains the ribosomal catalytic site termed the peptidyl transferase center (PTC), which catalyzes the formation of peptide bonds, thereby polymerizing the amino acids delivered by tRNAs into a polypeptide chain. The nascent polypeptides leave the ribosome through a tunnel in the LSU and interact with protein factors that function in enzymatic processing, targeting, and the membrane insertion of nascent chains at the exit of the ribosomal tunnel. This chain is Small ribosomal subunit protein uS13A (rps1801), found in Schizosaccharomyces pombe (strain 972 / ATCC 24843) (Fission yeast).